The sequence spans 564 residues: MEALLLPPSPEPQNQITNPANSKPNHQSGDVHKDETMMMKKKKDTNPSNLEKRKLKGKKKEIMDNDEASSSYCSTSSTSNSNSTKRVTRVVHRLRNPMRLGMARRSVGERQAEKLAKPLGFSLAAFANMVIARKNAAGQNVYVDDLVEIFATLVEESLANVYGNKLGSFATNFEQTFSSTLKILKLTNECANPHQSNNNDGGSCNLDRSTIDGCSDTELFERETSSATSAYEVMQGSATATSLMNELALFEETLQLSCVPPRSSAMALTTDERFLKEQTRANDLKTVEIGLQIRELRCKETALGLKFESNNLGKAALELDVSKAAFRAEKFKTELEDTRKEEMVTRIMDWLLVSVFSMLASMVLGVYNFSIKRIEDATSVCDQSEEKSSSWWVPKQVSSINSGFNTFICRVRVWVQIFFGVLMIIVFTYFLNKRSSGTKQTMPISFIVLFLGIFCGVSGKLCVDTLGGDGKLWLIVWEVFCLLQFVANVFTLALYGLMFGPINVTQETRSNRCNSMFPYWARRSVVYVVILFVLPVINGLLPFATFGEWRDFAMYHLHGGSDYA.

The segment at 1-87 (MEALLLPPSP…TSNSNSTKRV (87 aa)) is disordered. Residues 12–28 (PQNQITNPANSKPNHQS) are compositionally biased toward polar residues. A compositionally biased stretch (basic and acidic residues) spans 29-38 (GDVHKDETMM). A compositionally biased stretch (low complexity) spans 69–84 (SSSYCSTSSTSNSNST). 5 consecutive transmembrane segments (helical) span residues 347 to 367 (IMDWLLVSVFSMLASMVLGVY), 411 to 431 (VRVWVQIFFGVLMIIVFTYFL), 443 to 463 (PISFIVLFLGIFCGVSGKLCV), 472 to 492 (LWLIVWEVFCLLQFVANVFTL), and 526 to 546 (VYVVILFVLPVINGLLPFATF).

Interacts with SIM and SMR1. In terms of tissue distribution, ubiquitous.

The protein localises to the membrane. It is found in the nucleus membrane. Functionally, may play a role in transcriptional processes. Negatively regulates the senescence and chlorotic lesions induced by biotic (e.g. pathogens) and abiotic (e.g. sugars, darkness) agents, probably by controlling programmed cell death (pcd). Negative regulator of plant programmed cell death (PCD) and effector-triggered immunity (ETI). Promotes cell division and endoreduplication (e.g. in trichomes). The sequence is that of Protein CPR-5 from Arabidopsis thaliana (Mouse-ear cress).